The following is an 81-amino-acid chain: Short neurotoxin SN160 (81 aa).

The signal sequence occupies residues 1–21; the sequence is MKTLLLTLVVVTIVCLDLGYT. 4 cysteine pairs are disulfide-bonded: cysteine 24–cysteine 43, cysteine 38–cysteine 60, cysteine 62–cysteine 73, and cysteine 74–cysteine 79.

It belongs to the three-finger toxin family. Short-chain subfamily. Type I alpha-neurotoxin sub-subfamily. In terms of tissue distribution, expressed by the venom gland.

It is found in the secreted. Functionally, binds to muscle nicotinic acetylcholine receptor (nAChR) and inhibit acetylcholine from binding to the receptor, thereby impairing neuromuscular transmission. The protein is Short neurotoxin SN160 of Hydrophis hardwickii (Hardwick's spine-bellied seasnake).